We begin with the raw amino-acid sequence, 633 residues long: Keratin, type II cytoskeletal 2 epidermal (633 aa).

The tract at residues 1–189 (MSCQISCKSR…DPEIQNVKSQ (189 aa)) is head. Arg18 carries the asymmetric dimethylarginine modification. 3 positions are modified to phosphoserine: Ser21, Ser24, and Ser60. Residues 190–225 (EREQIKTLNNKFASFIDKVRFLEQQNQVLQTKWELL) form a coil 1A region. The IF rod domain maps to 190 to 503 (EREQIKTLNN…KLLEGEECRM (314 aa)). Residues 226 to 244 (QQLDVSTRTTNLEPIFQAY) form a linker 1 region. The tract at residues 245–336 (IAKLKKYVDT…FLFDXELSQM (92 aa)) is coil 1B. Positions 337–360 (QTQISETNVTLSMDNNRSLDLDSI) are linker 12. Residues 361-499 (ISEVKAQYEE…ATYRKLLEGE (139 aa)) are coil 2. The interval 500–633 (ECRMSGDLSS…SGSSVTFSFR (134 aa)) is tail. A compositionally biased stretch (low complexity) spans 518-527 (SSMSSSMTSR). The tract at residues 518–633 (SSMSSSMTSR…SGSSVTFSFR (116 aa)) is disordered. The segment covering 528 to 613 (GGFGGYGSGG…GYGSGGGSRG (86 aa)) has biased composition (gly residues). Residues Arg588 and Arg612 each carry the omega-N-methylarginine modification.

It belongs to the intermediate filament family. Heterotetramer of two type I and two type II keratins. Associates with KRT10.

It localises to the cytoplasm. In terms of biological role, probably contributes to terminal cornification. Associated with keratinocyte activation, proliferation and keratinization. Required for maintenance of corneocytes and keratin filaments in suprabasal keratinocytes in the epidermis of the ear, potentially via moderation of expression and localization of keratins and their partner proteins. Plays a role in the establishment of the epidermal barrier on plantar skin. The protein is Keratin, type II cytoskeletal 2 epidermal (KRT2) of Canis lupus familiaris (Dog).